The primary structure comprises 580 residues: Glypican-3 (580 aa).

The first 24 residues, 1 to 24 (MAGTVRTACLVVAMLLSLDFPGQA), serve as a signal peptide directing secretion. At Gln25 the chain carries Pyrrolidone carboxylic acid. Cystine bridges form between Cys35–Cys72, Cys65–Cys262, Cys73–Cys265, Cys197–Cys349, Cys252–Cys285, Cys274–Cys422, and Cys278–Cys410. N-linked (GlcNAc...) asparagine glycans are attached at residues Asn124 and Asn241. Residue Ser352 is modified to Phosphoserine; by FAM20C. A glycan (N-linked (GlcNAc...) asparagine) is linked at Asn418. Ser495 and Ser509 each carry an O-linked (Xyl...) (glycosaminoglycan) serine glycan. Asn554 carries GPI-anchor amidated asparagine lipidation. A propeptide spans 555–580 (LGNVHSPLKLLTSMAISVVCFFFLVH) (removed in mature form).

The protein belongs to the glypican family. Heterodimer; disulfide-linked. Cleavage by a furin-like convertase results in production of alpha and beta chains which form a disulfide-linked heterodimer. Interacts with DPP4. Interacts with FGF2. Interacts with WNT5A. Also interacts with WNT3A and WNT7B. Interacts with hedgehog protein SHH; the heparan sulfate chains are not required for the interaction. Also interacts with hedgehog protein IHH. Interacts with CD81. Interacts with Wnt receptors FZD4, FZD7 and FZD8; the heparan sulfate chains are required for the interaction. Post-translationally, O-glycosylated; contains heparan sulfate and/or chondroitin sulfate. Cleaved intracellularly by a furin-like convertase to generate 2 subunits, alpha and beta, which remain associated through disulfide bonds and are associated with the cell surface via the GPI-anchor. This processing is essential for its role in inhibition of hedgehog signaling. A second proteolytic event may result in cleavage of the protein on the cell surface, separating it from the GPI-anchor and leading to its shedding from the cell surface. In terms of tissue distribution, detected in placenta (at protein level). Highly expressed in lung, liver and kidney.

The protein resides in the cell membrane. Functionally, cell surface proteoglycan. Negatively regulates the hedgehog signaling pathway when attached via the GPI-anchor to the cell surface by competing with the hedgehog receptor PTC1 for binding to hedgehog proteins. Binding to the hedgehog protein SHH triggers internalization of the complex by endocytosis and its subsequent lysosomal degradation. Positively regulates the canonical Wnt signaling pathway by binding to the Wnt receptor Frizzled and stimulating the binding of the Frizzled receptor to Wnt ligands. Positively regulates the non-canonical Wnt signaling pathway. Binds to CD81 which decreases the availability of free CD81 for binding to the transcriptional repressor HHEX, resulting in nuclear translocation of HHEX and transcriptional repression. Inhibits the dipeptidyl peptidase activity of DPP4. Plays a role in limb patterning and skeletal development by controlling the cellular response to BMP4. Modulates the effects of growth factors BMP2, BMP7 and FGF7 on renal branching morphogenesis. Required for coronary vascular development. Plays a role in regulating cell movements during gastrulation. This Homo sapiens (Human) protein is Glypican-3 (GPC3).